A 453-amino-acid chain; its full sequence is uncharacterized protein (453 aa).

The region spanning 5–63 is the TRAM domain; sequence LLKKNQSIELTIEDLTHDGSGVGKIDGYPFFIPNTLPGEKVTAKIIKLNKNYGFARMEN. C76, C82, C85, and C162 together coordinate [4Fe-4S] cluster. S-adenosyl-L-methionine-binding residues include Q285, Y314, E335, and D383. C410 serves as the catalytic Nucleophile.

The protein belongs to the class I-like SAM-binding methyltransferase superfamily. RNA M5U methyltransferase family.

This is an uncharacterized protein from Listeria monocytogenes serovar 1/2a (strain ATCC BAA-679 / EGD-e).